The following is a 376-amino-acid chain: O-demethylpuromycin-O-methyltransferase (376 aa).

Residues 1 to 28 (MAPTEATRGGPADPAPAPEAHRGGHTEH) form a disordered region. Residues 19–28 (EAHRGGHTEH) show a composition bias toward basic and acidic residues. S-adenosyl-L-methionine is bound by residues Asp235 and 261 to 263 (GDF). The active-site Proton acceptor is His281.

Belongs to the class I-like SAM-binding methyltransferase superfamily. Cation-independent O-methyltransferase family.

The enzyme catalyses O-demethylpuromycin + S-adenosyl-L-methionine = puromycin + S-adenosyl-L-homocysteine + H(+). In Streptomyces alboniger, this protein is O-demethylpuromycin-O-methyltransferase (dmpM).